The primary structure comprises 70 residues: DNA gyrase inhibitor YacG (70 aa).

The Zn(2+) site is built by C21, C24, C36, and C40.

The protein belongs to the DNA gyrase inhibitor YacG family. In terms of assembly, interacts with GyrB. Zn(2+) serves as cofactor.

Inhibits all the catalytic activities of DNA gyrase by preventing its interaction with DNA. Acts by binding directly to the C-terminal domain of GyrB, which probably disrupts DNA binding by the gyrase. The polypeptide is DNA gyrase inhibitor YacG (Sinorhizobium medicae (strain WSM419) (Ensifer medicae)).